A 98-amino-acid polypeptide reads, in one-letter code: Aspartyl/glutamyl-tRNA(Asn/Gln) amidotransferase subunit C (98 aa).

This sequence belongs to the GatC family. In terms of assembly, heterotrimer of A, B and C subunits.

It catalyses the reaction L-glutamyl-tRNA(Gln) + L-glutamine + ATP + H2O = L-glutaminyl-tRNA(Gln) + L-glutamate + ADP + phosphate + H(+). It carries out the reaction L-aspartyl-tRNA(Asn) + L-glutamine + ATP + H2O = L-asparaginyl-tRNA(Asn) + L-glutamate + ADP + phosphate + 2 H(+). Allows the formation of correctly charged Asn-tRNA(Asn) or Gln-tRNA(Gln) through the transamidation of misacylated Asp-tRNA(Asn) or Glu-tRNA(Gln) in organisms which lack either or both of asparaginyl-tRNA or glutaminyl-tRNA synthetases. The reaction takes place in the presence of glutamine and ATP through an activated phospho-Asp-tRNA(Asn) or phospho-Glu-tRNA(Gln). The chain is Aspartyl/glutamyl-tRNA(Asn/Gln) amidotransferase subunit C from Microcystis aeruginosa (strain NIES-843 / IAM M-2473).